The following is a 611-amino-acid chain: DNA mismatch repair protein MutL (611 aa).

The protein belongs to the DNA mismatch repair MutL/HexB family.

Functionally, this protein is involved in the repair of mismatches in DNA. It is required for dam-dependent methyl-directed DNA mismatch repair. May act as a 'molecular matchmaker', a protein that promotes the formation of a stable complex between two or more DNA-binding proteins in an ATP-dependent manner without itself being part of a final effector complex. This Borreliella afzelii (strain PKo) (Borrelia afzelii) protein is DNA mismatch repair protein MutL.